Reading from the N-terminus, the 132-residue chain is Large-conductance mechanosensitive channel (132 aa).

The next 3 membrane-spanning stretches (helical) occupy residues 8–28, 30–50, and 67–87; these read FALKGNVMDLAVGVVIGGAFG, IVSSLVSDVIMPLVGLLLGGV, and GAFIQTVVDFLIIAFSIFLFI.

It belongs to the MscL family. Homopentamer.

It is found in the cell membrane. In terms of biological role, channel that opens in response to stretch forces in the membrane lipid bilayer. May participate in the regulation of osmotic pressure changes within the cell. The sequence is that of Large-conductance mechanosensitive channel from Bacillus cytotoxicus (strain DSM 22905 / CIP 110041 / 391-98 / NVH 391-98).